Here is a 64-residue protein sequence, read N- to C-terminus: Large ribosomal subunit protein bL35 (64 aa).

It belongs to the bacterial ribosomal protein bL35 family.

This is Large ribosomal subunit protein bL35 from Kineococcus radiotolerans (strain ATCC BAA-149 / DSM 14245 / SRS30216).